The primary structure comprises 125 residues: Glycine cleavage system H protein (125 aa).

Residues 21 to 103 (SVTIGISNQA…YSAGWIVKIK (83 aa)) enclose the Lipoyl-binding domain. N6-lipoyllysine is present on lysine 62.

This sequence belongs to the GcvH family. The glycine cleavage system is composed of four proteins: P, T, L and H. (R)-lipoate serves as cofactor.

Functionally, the glycine cleavage system catalyzes the degradation of glycine. The H protein shuttles the methylamine group of glycine from the P protein to the T protein. This chain is Glycine cleavage system H protein, found in Psychromonas ingrahamii (strain DSM 17664 / CCUG 51855 / 37).